A 541-amino-acid chain; its full sequence is Membrane protein insertase YidC (541 aa).

A helical membrane pass occupies residues 7–27 (ILLLALALVSFLLFQQWQVET). Positions 34 to 55 (TVSTVQQTHKNGDVPTSSTANS) are enriched in polar residues. A disordered region spans residues 34-59 (TVSTVQQTHKNGDVPTSSTANSDAPV). Transmembrane regions (helical) follow at residues 343–363 (SFIQ…TFIV), 418–438 (LGGC…YWAL), 456–476 (LSAQ…MFLI), and 495–515 (FIPV…VLYW).

Belongs to the OXA1/ALB3/YidC family. Type 1 subfamily. In terms of assembly, interacts with the Sec translocase complex via SecD. Specifically interacts with transmembrane segments of nascent integral membrane proteins during membrane integration.

The protein resides in the cell inner membrane. In terms of biological role, required for the insertion and/or proper folding and/or complex formation of integral membrane proteins into the membrane. Involved in integration of membrane proteins that insert both dependently and independently of the Sec translocase complex, as well as at least some lipoproteins. Aids folding of multispanning membrane proteins. The polypeptide is Membrane protein insertase YidC (Aliivibrio salmonicida (strain LFI1238) (Vibrio salmonicida (strain LFI1238))).